Consider the following 238-residue polypeptide: Ribonuclease PH (238 aa).

Phosphate is bound by residues R86 and 124 to 126; that span reads GTR.

Belongs to the RNase PH family. Homohexameric ring arranged as a trimer of dimers.

The enzyme catalyses tRNA(n+1) + phosphate = tRNA(n) + a ribonucleoside 5'-diphosphate. Its function is as follows. Phosphorolytic 3'-5' exoribonuclease that plays an important role in tRNA 3'-end maturation. Removes nucleotide residues following the 3'-CCA terminus of tRNAs; can also add nucleotides to the ends of RNA molecules by using nucleoside diphosphates as substrates, but this may not be physiologically important. Probably plays a role in initiation of 16S rRNA degradation (leading to ribosome degradation) during starvation. This Pectobacterium atrosepticum (strain SCRI 1043 / ATCC BAA-672) (Erwinia carotovora subsp. atroseptica) protein is Ribonuclease PH.